The sequence spans 116 residues: Iron-sulfur cluster insertion protein ErpA (116 aa).

3 residues coordinate iron-sulfur cluster: C44, C108, and C110.

It belongs to the HesB/IscA family. Homodimer. Iron-sulfur cluster is required as a cofactor.

In terms of biological role, required for insertion of 4Fe-4S clusters for at least IspG. The protein is Iron-sulfur cluster insertion protein ErpA of Pseudomonas fluorescens (strain Pf0-1).